Here is a 438-residue protein sequence, read N- to C-terminus: UDP-N-acetylmuramoylalanine--D-glutamate ligase (438 aa).

112–118 (GSNGKST) lines the ATP pocket.

It belongs to the MurCDEF family.

Its subcellular location is the cytoplasm. It carries out the reaction UDP-N-acetyl-alpha-D-muramoyl-L-alanine + D-glutamate + ATP = UDP-N-acetyl-alpha-D-muramoyl-L-alanyl-D-glutamate + ADP + phosphate + H(+). It participates in cell wall biogenesis; peptidoglycan biosynthesis. Functionally, cell wall formation. Catalyzes the addition of glutamate to the nucleotide precursor UDP-N-acetylmuramoyl-L-alanine (UMA). This Pectobacterium atrosepticum (strain SCRI 1043 / ATCC BAA-672) (Erwinia carotovora subsp. atroseptica) protein is UDP-N-acetylmuramoylalanine--D-glutamate ligase.